We begin with the raw amino-acid sequence, 461 residues long: SWM histone demethylase complex subunit phf1 (461 aa).

The interval 79-130 is disordered; sequence PYGGMTMPASSSSGATSVPPEQDPSLSVSFNRLPKSASTKTKNGRIRSSRRE. A compositionally biased stretch (polar residues) spans 102-119; it reads PSLSVSFNRLPKSASTKT. Residues 190–246 form a PHD-type zinc finger; that stretch reads VTLCSVCQRGHSPLSNRIVFCDGCNSPYHQLCHHPPIDDATVQDVDAEWFCMKCQYR.

In terms of assembly, component of the SWM histone demethylase complex composed of at least lsd1, lsd2, phf1 and phf2.

The protein resides in the nucleus. Component of the SWM histone demethylase complex that specifically demethylates H3K9me2, a specific tag for epigenetic transcriptional activation, thereby acting as a corepressor. Has a role in regulating heterochromatin propagation and euchromatic transcription. This Schizosaccharomyces pombe (strain 972 / ATCC 24843) (Fission yeast) protein is SWM histone demethylase complex subunit phf1 (phf1).